Here is a 272-residue protein sequence, read N- to C-terminus: Zinc transporter ZupT (272 aa).

Helical transmembrane passes span 12 to 32 (ALAV…MVVF), 40 to 60 (LLAF…LSEI), 76 to 96 (LGFT…MVID), 126 to 146 (LLTA…TFFA), 158 to 178 (AFAI…PVYF), 187 to 207 (FGAS…GYLL), 211 to 231 (VLSE…MVFL), and 247 to 267 (HETV…LVLF). Fe(2+) is bound by residues asparagine 136 and glutamate 139. Positions 139 and 164 each coordinate Zn(2+). Residues asparagine 165, glutamate 168, and glutamate 197 each contribute to the Fe(2+) site. Glutamate 168 serves as a coordination point for Zn(2+).

The protein belongs to the ZIP transporter (TC 2.A.5) family. ZupT subfamily.

The protein localises to the cell inner membrane. The catalysed reaction is Zn(2+)(in) = Zn(2+)(out). Its function is as follows. Mediates zinc uptake. May also transport other divalent cations. This chain is Zinc transporter ZupT, found in Xanthomonas campestris pv. campestris (strain ATCC 33913 / DSM 3586 / NCPPB 528 / LMG 568 / P 25).